A 131-amino-acid polypeptide reads, in one-letter code: Global transcriptional regulator Spx 1 (131 aa).

Cysteines 10 and 13 form a disulfide.

It belongs to the ArsC family. Spx subfamily. Interacts with the C-terminal domain of the alpha subunit of the RNAP.

It is found in the cytoplasm. Functionally, global transcriptional regulator that plays a key role in stress response and exerts either positive or negative regulation of genes. Acts by interacting with the C-terminal domain of the alpha subunit of the RNA polymerase (RNAP). This interaction can enhance binding of RNAP to the promoter region of target genes and stimulate their transcription, or block interaction of RNAP with activator. This chain is Global transcriptional regulator Spx 1, found in Oceanobacillus iheyensis (strain DSM 14371 / CIP 107618 / JCM 11309 / KCTC 3954 / HTE831).